Reading from the N-terminus, the 892-residue chain is DNA mismatch repair protein MutS (892 aa).

ATP is bound at residue 607 to 614 (GPNMSGKS).

It belongs to the DNA mismatch repair MutS family.

This protein is involved in the repair of mismatches in DNA. It is possible that it carries out the mismatch recognition step. This protein has a weak ATPase activity. The polypeptide is DNA mismatch repair protein MutS (Bacillus cereus (strain AH820)).